The sequence spans 281 residues: F-actin-capping protein subunit alpha (281 aa).

This sequence belongs to the F-actin-capping protein alpha subunit family. In terms of assembly, component of the F-actin capping complex, composed of a heterodimer of an alpha and a beta subunit.

The protein localises to the cytoplasm. Its subcellular location is the cytoskeleton. Its function is as follows. F-actin-capping proteins bind in a Ca(2+)-independent manner to the fast growing ends of actin filaments (barbed end) thereby blocking the exchange of subunits at these ends. Unlike other capping proteins (such as gelsolin and severin), these proteins do not sever actin filaments. This is F-actin-capping protein subunit alpha (acpB) from Dictyostelium discoideum (Social amoeba).